A 288-amino-acid polypeptide reads, in one-letter code: Heme oxygenase 1 (288 aa).

The Cytoplasmic portion of the chain corresponds to 1-265 (MERPQPDSMP…KPPLNTRSQA (265 aa)). The heme b site is built by K18, H25, Y134, and R183. The tract at residues 223-260 (HDTKDQSPSRAPGLRQRASNKVQDSAPVETPRGKPPLN) is disordered. S229 bears the Phosphoserine mark. Residues 266–288 (PLLRWVLTLSFLVATVAVGLYAM) traverse the membrane as a helical; Anchor for type IV membrane protein segment.

This sequence belongs to the heme oxygenase family. (Microbial infection) Interacts with SARS-CoV-2 ORF3A protein; the interaction promotes ORF3A-induced autophagy but is unlikely to be involved in ORF3A-mediated induction of reticulophagy. In terms of assembly, homodimer and higher order homooligomer. Oligomerization is crucial for its stability and function in the endoplasmic reticulum. Interacts with FLVCR2; this interaction is potentiated in the presence of heme. A soluble form arises by proteolytic removal of the membrane anchor. As to expression, expressed at higher levels in renal cancer tissue than in normal tissue (at protein level).

Its subcellular location is the endoplasmic reticulum membrane. It catalyses the reaction heme b + 3 reduced [NADPH--hemoprotein reductase] + 3 O2 = biliverdin IXalpha + CO + Fe(2+) + 3 oxidized [NADPH--hemoprotein reductase] + 3 H2O + H(+). Functionally, catalyzes the oxidative cleavage of heme at the alpha-methene bridge carbon, released as carbon monoxide (CO), to generate biliverdin IXalpha, while releasing the central heme iron chelate as ferrous iron. Affords protection against programmed cell death and this cytoprotective effect relies on its ability to catabolize free heme and prevent it from sensitizing cells to undergo apoptosis. In terms of biological role, (Microbial infection) During SARS-COV-2 infection, promotes SARS-CoV-2 ORF3A-mediated autophagy but is unlikely to be required for ORF3A-mediated induction of reticulophagy. Its function is as follows. Catalyzes the oxidative cleavage of heme at the alpha-methene bridge carbon, released as carbon monoxide (CO), to generate biliverdin IXalpha, while releasing the central heme iron chelate as ferrous iron. This chain is Heme oxygenase 1 (HMOX1), found in Homo sapiens (Human).